A 433-amino-acid chain; its full sequence is Mitochondrial inner membrane magnesium transporter MIT1 (433 aa).

Residues 257 to 298 adopt a coiled-coil conformation; sequence TNKLLRDMMKIKNNLQKLSNLLNALRTNIEKILNNENDMKNM. Residues 360-380 traverse the membrane as a helical segment; that stretch reads FILLNAKISFSTLLFSISSVV. The Extracellular segment spans residues 381 to 396; sequence TSLFGMNLKNFVEDSN. The helical transmembrane segment at 397-417 threads the bilayer; it reads YAFIIVSIFVSVWSIIGIYVT. Topologically, residues 418-433 are mitochondrial matrix; the sequence is KNINTLLKFFDRYNFR.

This sequence belongs to the CorA metal ion transporter (MIT) (TC 1.A.35) family.

Its subcellular location is the mitochondrion inner membrane. Functionally, mitochondrial inner membrane magnesium transporter required for mitochondrial magnesium homeostasis. Involved in the development of the sporozoite in the mosquito vector midgut. This Plasmodium berghei (strain Anka) protein is Mitochondrial inner membrane magnesium transporter MIT1.